The primary structure comprises 131 residues: D-ribose pyranase (131 aa).

The active-site Proton donor is H20. Substrate contacts are provided by residues D28, H98, and 120–122 (YSN).

Belongs to the RbsD / FucU family. RbsD subfamily. As to quaternary structure, homodecamer.

It localises to the cytoplasm. It catalyses the reaction beta-D-ribopyranose = beta-D-ribofuranose. It functions in the pathway carbohydrate metabolism; D-ribose degradation; D-ribose 5-phosphate from beta-D-ribopyranose: step 1/2. Catalyzes the interconversion of beta-pyran and beta-furan forms of D-ribose. The protein is D-ribose pyranase of Latilactobacillus sakei subsp. sakei (strain 23K) (Lactobacillus sakei subsp. sakei).